A 72-amino-acid chain; its full sequence is Translation initiation factor IF-1 (72 aa).

Positions 1–72 constitute an S1-like domain; the sequence is MAKEGAIEVE…TRGRIVYRYK (72 aa).

It belongs to the IF-1 family. In terms of assembly, component of the 30S ribosomal translation pre-initiation complex which assembles on the 30S ribosome in the order IF-2 and IF-3, IF-1 and N-formylmethionyl-tRNA(fMet); mRNA recruitment can occur at any time during PIC assembly.

Its subcellular location is the cytoplasm. In terms of biological role, one of the essential components for the initiation of protein synthesis. Stabilizes the binding of IF-2 and IF-3 on the 30S subunit to which N-formylmethionyl-tRNA(fMet) subsequently binds. Helps modulate mRNA selection, yielding the 30S pre-initiation complex (PIC). Upon addition of the 50S ribosomal subunit IF-1, IF-2 and IF-3 are released leaving the mature 70S translation initiation complex. In Corynebacterium efficiens (strain DSM 44549 / YS-314 / AJ 12310 / JCM 11189 / NBRC 100395), this protein is Translation initiation factor IF-1.